A 219-amino-acid chain; its full sequence is Beta-crystallin B2 (219 aa).

Ala2 bears the N-acetylalanine mark. An N-terminal arm region spans residues 2–16; sequence ASEHQMPASKQQPAS. 2 Beta/gamma crystallin 'Greek key' domains span residues 17–56 and 57–101; these read PNIA…LVHS and GPWV…RPIK. Residues 102 to 120 are connecting peptide; that stretch reads VVRAPRQPLPTRQTKDSQE. Beta/gamma crystallin 'Greek key' domains follow at residues 121–162 and 163–205; these read HKIV…RVQS and GTWV…RRIR. Positions 207-219 are C-terminal arm; the sequence is MQWHQRGAYHPSN.

This sequence belongs to the beta/gamma-crystallin family. As to quaternary structure, homo/heterodimer, or complexes of higher-order. The structure of beta-crystallin oligomers seems to be stabilized through interactions between the N-terminal arms.

Functionally, crystallins are the dominant structural components of the vertebrate eye lens. The sequence is that of Beta-crystallin B2 (CRYBB2) from Gallus gallus (Chicken).